A 152-amino-acid chain; its full sequence is D-erythrulose-4-phosphate isomerase (152 aa).

The Proton acceptor role is filled by Cys67.

It belongs to the LacAB/RpiB family.

The catalysed reaction is D-erythrulose 4-phosphate = D-erythrose 4-phosphate. It participates in carbohydrate metabolism. Functionally, involved in catabolism of D-apiose. Catalyzes the isomerization of D-erythrulose 4-phosphate to D-erythrose 4-phosphate. The polypeptide is D-erythrulose-4-phosphate isomerase (Pectobacterium atrosepticum (strain SCRI 1043 / ATCC BAA-672) (Erwinia carotovora subsp. atroseptica)).